The following is a 152-amino-acid chain: Protein IpgF (152 aa).

Residues 1-17 (MSRFVFILLCFIPYLGR) form the signal peptide.

This sequence belongs to the IagB/IpgF/P19 family.

This is Protein IpgF (ipgF) from Shigella sonnei.